The sequence spans 737 residues: Transcriptional repressor CTCF (737 aa).

Methionine 1 carries the N-acetylmethionine modification. Lysine 18 participates in a covalent cross-link: Glycyl lysine isopeptide (Lys-Gly) (interchain with G-Cter in SUMO2). Residue lysine 74 forms a Glycyl lysine isopeptide (Lys-Gly) (interchain with G-Cter in SUMO) linkage. The segment at 180-211 is disordered; that stretch reads QGELPPQEDPSWQKDPDYQPPAKKTKKTKKSK. A compositionally biased stretch (basic residues) spans 202 to 211; it reads KKTKKTKKSK. Lysine 219 participates in a covalent cross-link: Glycyl lysine isopeptide (Lys-Gly) (interchain with G-Cter in SUMO2). The C2H2-type 1 zinc-finger motif lies at 266 to 288; that stretch reads FQCELCSYTCPRRSNLDRHMKSH. At threonine 289 the chain carries Phosphothreonine. The segment at 294–316 adopts a C2H2-type 2 zinc-finger fold; the sequence is HKCHLCGRAFRTVTLLRNHLNTH. Threonine 317 is modified (phosphothreonine). 2 C2H2-type zinc fingers span residues 322 to 345 and 351 to 373; these read HKCP…RYKH and FKCS…IRSH. Threonine 374 is subject to Phosphothreonine. Residues 379–401 form a C2H2-type 5 zinc finger; the sequence is FQCSLCSYASRDTYKLKRHMRTH. Phosphoserine is present on serine 402. C2H2-type zinc fingers lie at residues 407–430, 437–460, 467–489, 495–517, and 523–546; these read YECY…LQKH, FHCP…RKQH, KKCR…QKSH, FKCD…KRTH, and YACS…KRYH. The C2H2-type 11; atypical zinc finger occupies 555 to 577; the sequence is FVCSKCGKTFTRRNTMARHADNC. Disordered stretches follow at residues 573–687 and 699–727; these read HADN…EDQN and KKEP…GDLT. Residues 593-604 show a composition bias toward basic residues; that stretch reads KSKRGRKRKMRS. Phosphoserine occurs at positions 609, 610, and 612. Residues 610–636 are compositionally biased toward acidic residues; sequence SDSENAEPDLDDNEEEEEPAVEIEPEP. Residues 637–657 are compositionally biased toward pro residues; sequence EPQPQPQPQPQPQPVAPAPPP. Residues 668–687 show a composition bias toward polar residues; sequence RTNQPKQNQPTAIIQVEDQN. Lysine 699 participates in a covalent cross-link: Glycyl lysine isopeptide (Lys-Gly) (interchain with G-Cter in SUMO); alternate. Lysine 699 is covalently cross-linked (Glycyl lysine isopeptide (Lys-Gly) (interchain with G-Cter in SUMO2); alternate). Over residues 704 to 714 the composition is skewed to acidic residues; it reads AEPAEGEEEEA.

It belongs to the CTCF zinc-finger protein family. As to quaternary structure, interacts with CHD8. Interacts with LLPH. Interacts with CENPE. Interacts with BRD2; promoting BRD2 recruitment to chromatin. Post-translationally, sumoylated on Lys-74 and Lys-699; sumoylation of CTCF contributes to the repressive function of CTCF on the MYC P2 promoter.

The protein localises to the nucleus. It localises to the nucleoplasm. Its subcellular location is the chromosome. It is found in the centromere. Its function is as follows. Chromatin binding factor that binds to DNA sequence specific sites and regulates the 3D structure of chromatin. Binds together strands of DNA, thus forming chromatin loops, and anchors DNA to cellular structures, such as the nuclear lamina. Defines the boundaries between active and heterochromatic DNA via binding to chromatin insulators, thereby preventing interaction between promoter and nearby enhancers and silencers. Plays a critical role in the epigenetic regulation. Participates in the allele-specific gene expression at the imprinted IGF2/H19 gene locus. On the maternal allele, binding within the H19 imprinting control region (ICR) mediates maternally inherited higher-order chromatin conformation to restrict enhancer access to IGF2. Mediates interchromosomal association between IGF2/H19 and WSB1/NF1 and may direct distant DNA segments to a common transcription factory. Regulates asynchronous replication of IGF2/H19. Plays a critical role in gene silencing over considerable distances in the genome. Preferentially interacts with unmethylated DNA, preventing spreading of CpG methylation and maintaining methylation-free zones. Inversely, binding to target sites is prevented by CpG methylation. Plays an important role in chromatin remodeling. Can dimerize when it is bound to different DNA sequences, mediating long-range chromatin looping. Causes local loss of histone acetylation and gain of histone methylation in the beta-globin locus, without affecting transcription. When bound to chromatin, it provides an anchor point for nucleosomes positioning. Seems to be essential for homologous X-chromosome pairing. May participate with Tsix in establishing a regulatable epigenetic switch for X chromosome inactivation. May play a role in preventing the propagation of stable methylation at the escape genes from X-inactivation. Involved in sister chromatid cohesion. Associates with both centromeres and chromosomal arms during metaphase and required for cohesin localization to CTCF sites. Plays a role in the recruitment of CENPE to the pericentromeric/centromeric regions of the chromosome during mitosis. Acts as a transcriptional repressor binding to promoters of vertebrate MYC gene and BAG1 gene. Also binds to the PLK and PIM1 promoters. Acts as a transcriptional activator of APP. Regulates APOA1/C3/A4/A5 gene cluster and controls MHC class II gene expression. Plays an essential role in oocyte and preimplantation embryo development by activating or repressing transcription. Seems to act as tumor suppressor. This Rattus norvegicus (Rat) protein is Transcriptional repressor CTCF (Ctcf).